We begin with the raw amino-acid sequence, 383 residues long: MDWSSYLSRQLSERRSTSLWRQRQVNQKSDGRFLYAADGKYLNFSSNDYLGLSANPAIISAWQRGAEQYGVGSGGSGHITGYTKAHQLLEQQLADWLGYPKALLFISGYSANQGVIAALMTEQDRIIADRLSHASLMEAAMHSPAQLRRFLHNQPESLANLLATPCVGKTLVVTEGVFSMDGDCAPLADIHQQTRISGNWLMVDDAHGIGVCGEQGRGSCWQQKVKPEILIVTFGKAFGLSGAAVLCDEQTAEYLIQYARHLIYSTSMPPAQAQALSEAVRQIQSGDELRQRLQQNINYFRRQAQKLPFNLTDSTTAIQPLIVSDNELSVSLSQSLQQKGIWVKAIRPPTVPPGSARLRITLTASHMPQDIDMLMEALHGFRS.

Residue Arg-21 participates in substrate binding. 108–109 (GY) contributes to the pyridoxal 5'-phosphate binding site. His-133 lines the substrate pocket. Pyridoxal 5'-phosphate contacts are provided by Ser-179, His-207, and Thr-233. At Lys-236 the chain carries N6-(pyridoxal phosphate)lysine. Position 350 (Thr-350) interacts with substrate.

This sequence belongs to the class-II pyridoxal-phosphate-dependent aminotransferase family. BioF subfamily. As to quaternary structure, homodimer. Pyridoxal 5'-phosphate serves as cofactor.

It catalyses the reaction 6-carboxyhexanoyl-[ACP] + L-alanine + H(+) = (8S)-8-amino-7-oxononanoate + holo-[ACP] + CO2. It participates in cofactor biosynthesis; biotin biosynthesis. Its function is as follows. Catalyzes the decarboxylative condensation of pimeloyl-[acyl-carrier protein] and L-alanine to produce 8-amino-7-oxononanoate (AON), [acyl-carrier protein], and carbon dioxide. This is 8-amino-7-oxononanoate synthase from Photorhabdus laumondii subsp. laumondii (strain DSM 15139 / CIP 105565 / TT01) (Photorhabdus luminescens subsp. laumondii).